We begin with the raw amino-acid sequence, 344 residues long: MEEKITYKNAGVDTEKGREFIQKIKRNVESTHGPRVIGGLGGFAGAYDVSVLKKYKHPILLSGTDGVGTKIELARLLKIYNTIGIDLVAMCVNDILVCGGEPFFFLDYIACGKLDPEKMDQIVSGIVQGCKMSNASLLGGETAEHPGTMKEDEFDLAGFVVGAVEKDSMIDGSTIRSGDKILGLESSGPHSNGFSLIRKLLLKEGKYLPTDPQQVKFLKDYALKPTRIYVSSILKLLQQVSVKGMVHITGGGYQENIPRILPQGTQSKFFKEKIPSGYFFEKIKKDHKIEELELFATFNMGIGYMVIVSEENAELAKKIMESSGEVVHEIGEIVSGNKEEVQFV.

The protein belongs to the AIR synthase family.

The protein resides in the cytoplasm. The enzyme catalyses 2-formamido-N(1)-(5-O-phospho-beta-D-ribosyl)acetamidine + ATP = 5-amino-1-(5-phospho-beta-D-ribosyl)imidazole + ADP + phosphate + H(+). Its pathway is purine metabolism; IMP biosynthesis via de novo pathway; 5-amino-1-(5-phospho-D-ribosyl)imidazole from N(2)-formyl-N(1)-(5-phospho-D-ribosyl)glycinamide: step 2/2. This Leptospira interrogans serogroup Icterohaemorrhagiae serovar copenhageni (strain Fiocruz L1-130) protein is Phosphoribosylformylglycinamidine cyclo-ligase (purM).